Reading from the N-terminus, the 460-residue chain is tRNA(Ile)-lysidine synthase (460 aa).

37–42 (SGGADS) provides a ligand contact to ATP.

The protein belongs to the tRNA(Ile)-lysidine synthase family.

The protein localises to the cytoplasm. The catalysed reaction is cytidine(34) in tRNA(Ile2) + L-lysine + ATP = lysidine(34) in tRNA(Ile2) + AMP + diphosphate + H(+). Functionally, ligates lysine onto the cytidine present at position 34 of the AUA codon-specific tRNA(Ile) that contains the anticodon CAU, in an ATP-dependent manner. Cytidine is converted to lysidine, thus changing the amino acid specificity of the tRNA from methionine to isoleucine. The sequence is that of tRNA(Ile)-lysidine synthase from Treponema denticola (strain ATCC 35405 / DSM 14222 / CIP 103919 / JCM 8153 / KCTC 15104).